Consider the following 124-residue polypeptide: Urease subunit beta (124 aa).

It belongs to the urease beta subunit family. In terms of assembly, heterotrimer of UreA (gamma), UreB (beta) and UreC (alpha) subunits. Three heterotrimers associate to form the active enzyme.

The protein localises to the cytoplasm. It catalyses the reaction urea + 2 H2O + H(+) = hydrogencarbonate + 2 NH4(+). Its pathway is nitrogen metabolism; urea degradation; CO(2) and NH(3) from urea (urease route): step 1/1. The polypeptide is Urease subunit beta (Bacillus subtilis (strain 168)).